A 451-amino-acid chain; its full sequence is L-seryl-tRNA(Sec) selenium transferase (451 aa).

The residue at position 286 (lysine 286) is an N6-(pyridoxal phosphate)lysine.

It belongs to the SelA family. Pyridoxal 5'-phosphate is required as a cofactor.

The protein localises to the cytoplasm. It catalyses the reaction L-seryl-tRNA(Sec) + selenophosphate + H(+) = L-selenocysteinyl-tRNA(Sec) + phosphate. Its pathway is aminoacyl-tRNA biosynthesis; selenocysteinyl-tRNA(Sec) biosynthesis; selenocysteinyl-tRNA(Sec) from L-seryl-tRNA(Sec) (bacterial route): step 1/1. Functionally, converts seryl-tRNA(Sec) to selenocysteinyl-tRNA(Sec) required for selenoprotein biosynthesis. The chain is L-seryl-tRNA(Sec) selenium transferase from Aliarcobacter butzleri (strain RM4018) (Arcobacter butzleri).